The sequence spans 75 residues: MSFPSLLFLGFSGVLAFGEVGWVGVYPPGRGMIRVRCVGCVVGWLGLRRVLVRGGIWLLLHPGIGRVLCLYLGAW.

The chain crosses the membrane as a helical span at residues 4–26 (PSLLFLGFSGVLAFGEVGWVGVY).

It localises to the membrane. This is an uncharacterized protein from Treponema pallidum (strain Nichols).